The sequence spans 803 residues: Volume-regulated anion channel subunit LRRC8B (803 aa).

Residues 1–25 (MITLTELKCLADAQSSYHILKPWWD) lie on the Cytoplasmic side of the membrane. The chain crosses the membrane as a helical span at residues 26–46 (VFWYYITLIMLLVAVLAGALQ). Residues 47–119 (LTQSRVLCCL…YEKQLHWFAK (73 aa)) lie on the Extracellular side of the membrane. 2 disulfides stabilise this stretch: Cys55-Cys304 and Cys109-Cys289. An N-linked (GlcNAc...) asparagine glycan is attached at Asn78. The helical transmembrane segment at 120–140 (FFPYLVLLHTLIFAACSNFWL) threads the bilayer. The Cytoplasmic portion of the chain corresponds to 141 to 261 (HYPSTSSRLE…DIIYRVYLKQ (121 aa)). Phosphoserine occurs at positions 186 and 196. Residues 262-282 (IIVKVILFVLIITYVPYFLSY) form a helical membrane-spanning segment. The Extracellular portion of the chain corresponds to 283-307 (ITLEIDCSIDVQAFTGYKRYQCVYS). A helical membrane pass occupies residues 308–328 (LAEIFKVLASFYVILVMLYGL). Topologically, residues 329 to 803 (TSSYSLWWML…ERLQTCLDKC (475 aa)) are cytoplasmic. LRR repeat units follow at residues 415-439 (VKNSQDKVELHLFMLNGLPDNVFEL), 440-462 (TEMEVLSLELIPEVKLPAAVAQL), 464-486 (NLRELHVYHSSLVVDHPALAFLE), 488-509 (NLRILRLKFTEMGKIPRWVFHL), 511-532 (NLKELYLSGCVLPEQLSSLHLE), 539-559 (NLRTLYLKSSLSRIPQVVTDL), 562-582 (SLQKLSLDNEGSKLVVLNNLK), 586-607 (NLKSLELLSCDLERIPHSIFSL), 609-630 (NLHELDLKENNLKTVEEIISFQ), 634-655 (SLSCLKLWHNNIAYIPAQIGAL), 657-678 (NLEQLFLGHNNIESLPLQLFLC), 680-701 (KLHYLDLSYNHLTFIPEEIQYL), 703-724 (NLQYFAVTNNNIEMLPDGLFQC), 726-747 (KLQCLLLGRNSLTDLSPLVGEL), and 749-771 (NLTHLELTGNYLETLPVELEGCQ).

It belongs to the LRRC8 family. Heterohexamer; oligomerizes with other LRRC8 proteins (LRRC8A, LRRC8C, LRRC8D and/or LRRC8E) to form a heterohexamer. In vivo, the subunit composition may depend primarily on expression levels, and heterooligomeric channels containing various proportions of the different LRRC8 proteins may coexist.

The protein resides in the cell membrane. It is found in the endoplasmic reticulum membrane. It carries out the reaction chloride(in) = chloride(out). The catalysed reaction is iodide(out) = iodide(in). The enzyme catalyses taurine(out) = taurine(in). In terms of biological role, non-essential component of the volume-regulated anion channel (VRAC, also named VSOAC channel), an anion channel required to maintain a constant cell volume in response to extracellular or intracellular osmotic changes. The VRAC channel conducts iodide better than chloride and can also conduct organic osmolytes like taurine. Channel activity requires LRRC8A plus at least one other family member (LRRC8B, LRRC8C, LRRC8D or LRRC8E); channel characteristics depend on the precise subunit composition. The chain is Volume-regulated anion channel subunit LRRC8B from Mus musculus (Mouse).